A 93-amino-acid polypeptide reads, in one-letter code: Cobalt transport protein CbiN (93 aa).

The next 2 helical transmembrane spans lie at 5–25 (LILLAMVVALMILPFFINHGG) and 63–83 (LLFTLQGSLGAAVIFYILGYA).

It belongs to the CbiN family. In terms of assembly, forms an energy-coupling factor (ECF) transporter complex composed of an ATP-binding protein (A component, CbiO), a transmembrane protein (T component, CbiQ) and 2 possible substrate-capture proteins (S components, CbiM and CbiN) of unknown stoichimetry.

The protein resides in the cell inner membrane. It participates in cofactor biosynthesis; adenosylcobalamin biosynthesis. Part of the energy-coupling factor (ECF) transporter complex CbiMNOQ involved in cobalt import. This is Cobalt transport protein CbiN from Klebsiella pneumoniae (strain 342).